Consider the following 227-residue polypeptide: Ferritin light chain (227 aa).

A signal peptide spans 1–19 (MKFFVALALFACLGSLALA). Cys-25 and Cys-44 are disulfide-bonded. The region spanning 48-208 (FAGIDHIEPE…GYANDLAKLM (161 aa)) is the Ferritin-like diiron domain.

This sequence belongs to the ferritin family. As to quaternary structure, oligomer of 12 light (L) chains and 12 heavy (H) chains; L and H chains are disulfide-linked. The functional molecule forms a roughly spherical shell with a diameter of 12 nm and contains a central cavity into which the insoluble ferric iron core is deposited. Expressed in hemolymph, gut, ovaries and to a lesser extent in testes (at protein level). Expressed in the head (at protein level).

It localises to the golgi apparatus. The protein resides in the secreted. In terms of biological role, stores iron in a soluble, non-toxic, readily available form. Important for iron homeostasis. Iron is taken up in the ferrous form and deposited as ferric hydroxides after oxidation. Ferritin is composed of a heavy (H) chain which is responsible for the oxidation and uptake of ferrous iron, and a light (L) chain which facilitates the nucleation of the ferrihydrite iron core. Required for dietary iron absorption in the midgut. Involved in tissue iron detoxification by exporting excess iron. Plays a role in the maintenance of circadian rhythms. Required for embryo and larval development. In Drosophila melanogaster (Fruit fly), this protein is Ferritin light chain.